Consider the following 100-residue polypeptide: ATP synthase subunit c (100 aa).

2 consecutive transmembrane segments (helical) span residues 30–50 (LLYL…GVGM) and 80–100 (AFIE…LFVV).

It belongs to the ATPase C chain family. F-type ATPases have 2 components, F(1) - the catalytic core - and F(0) - the membrane proton channel. F(1) has five subunits: alpha(3), beta(3), gamma(1), delta(1), epsilon(1). F(0) has three main subunits: a(1), b(2) and c(10-14). The alpha and beta chains form an alternating ring which encloses part of the gamma chain. F(1) is attached to F(0) by a central stalk formed by the gamma and epsilon chains, while a peripheral stalk is formed by the delta and b chains.

Its subcellular location is the cell inner membrane. Its function is as follows. F(1)F(0) ATP synthase produces ATP from ADP in the presence of a proton or sodium gradient. F-type ATPases consist of two structural domains, F(1) containing the extramembraneous catalytic core and F(0) containing the membrane proton channel, linked together by a central stalk and a peripheral stalk. During catalysis, ATP synthesis in the catalytic domain of F(1) is coupled via a rotary mechanism of the central stalk subunits to proton translocation. Functionally, key component of the F(0) channel; it plays a direct role in translocation across the membrane. A homomeric c-ring of between 10-14 subunits forms the central stalk rotor element with the F(1) delta and epsilon subunits. The chain is ATP synthase subunit c from Aquifex aeolicus (strain VF5).